Here is a 272-residue protein sequence, read N- to C-terminus: tRNA pseudouridine synthase A (272 aa).

The active-site Nucleophile is the Asp62. Tyr120 lines the substrate pocket.

It belongs to the tRNA pseudouridine synthase TruA family. Homodimer.

It carries out the reaction uridine(38/39/40) in tRNA = pseudouridine(38/39/40) in tRNA. Formation of pseudouridine at positions 38, 39 and 40 in the anticodon stem and loop of transfer RNAs. This is tRNA pseudouridine synthase A from Nitrosomonas europaea (strain ATCC 19718 / CIP 103999 / KCTC 2705 / NBRC 14298).